A 520-amino-acid chain; its full sequence is Probable alginate O-acetylase AlgI (520 aa).

The next 10 membrane-spanning stretches (helical) occupy residues 7–24 (VFLF…YLSG), 39–61 (FYAW…NYWI), 78–100 (WLIL…NFGV), 115–137 (FVLT…ISYI), 150–172 (NLID…VLRF), 239–261 (LYFD…GFRF), 311–333 (LFLT…IWGA), 353–375 (VLNP…IFRA), 402–424 (ANLT…FFGL), and 483–505 (WLSQ…ASVL). The active site involves His322.

It belongs to the membrane-bound acyltransferase family.

It localises to the cell inner membrane. Its pathway is glycan biosynthesis; alginate biosynthesis. Its function is as follows. Together with AlgJ and AlgF, forms an inner membrane complex which probably interacts with the alginate polymerization-transport complex and adds acetyl groups at the O-2 and O-3 positions of mannuronate residues. Acetylation of alginate is important for the architecture of biofilms and increases resistance to opsonic killing in the host. This Pseudomonas aeruginosa (strain ATCC 15692 / DSM 22644 / CIP 104116 / JCM 14847 / LMG 12228 / 1C / PRS 101 / PAO1) protein is Probable alginate O-acetylase AlgI (algI).